A 1081-amino-acid chain; its full sequence is Carbamoyl phosphate synthase large chain (1081 aa).

The interval 1 to 410 is carboxyphosphate synthetic domain; the sequence is MPKRTDIKTI…SFQKALRGLE (410 aa). ATP-binding residues include Arg129, Arg176, Gly182, Gly183, Glu215, Leu217, Glu222, Gly248, Ile249, His250, Gln292, and Glu306. Residues 133 to 335 form the ATP-grasp 1 domain; it reads KEAMTKIGLG…IAKVAAKLAV (203 aa). Positions 292, 306, and 308 each coordinate Mg(2+). Mn(2+) contacts are provided by Gln292, Glu306, and Asn308. An oligomerization domain region spans residues 411 to 558; it reads VGVDGLDEKS…YEAEHGECEA (148 aa). Residues 559–944 form a carbamoyl phosphate synthetic domain region; that stretch reads DPTERKKIMV…ALFKSQLAAG (386 aa). An ATP-grasp 2 domain is found at 683–878; that stretch reads QKLLHDLGLR…LAKVAARCMA (196 aa). Residues Arg719, Arg758, Leu760, Glu765, Gly790, Val791, His792, Ser793, Gln833, and Glu849 each coordinate ATP. Mg(2+) contacts are provided by Gln833, Glu849, and Asn851. Mn(2+)-binding residues include Gln833, Glu849, and Asn851. The region spanning 945-1081 is the MGS-like domain; sequence SRLPEKGTVL…YDLQGLHASL (137 aa). The allosteric domain stretch occupies residues 945–1081; it reads SRLPEKGTVL…YDLQGLHASL (137 aa).

This sequence belongs to the CarB family. In terms of assembly, composed of two chains; the small (or glutamine) chain promotes the hydrolysis of glutamine to ammonia, which is used by the large (or ammonia) chain to synthesize carbamoyl phosphate. Tetramer of heterodimers (alpha,beta)4. Mg(2+) serves as cofactor. Mn(2+) is required as a cofactor.

It catalyses the reaction hydrogencarbonate + L-glutamine + 2 ATP + H2O = carbamoyl phosphate + L-glutamate + 2 ADP + phosphate + 2 H(+). The catalysed reaction is hydrogencarbonate + NH4(+) + 2 ATP = carbamoyl phosphate + 2 ADP + phosphate + 2 H(+). The protein operates within amino-acid biosynthesis; L-arginine biosynthesis; carbamoyl phosphate from bicarbonate: step 1/1. It participates in pyrimidine metabolism; UMP biosynthesis via de novo pathway; (S)-dihydroorotate from bicarbonate: step 1/3. Large subunit of the glutamine-dependent carbamoyl phosphate synthetase (CPSase). CPSase catalyzes the formation of carbamoyl phosphate from the ammonia moiety of glutamine, carbonate, and phosphate donated by ATP, constituting the first step of 2 biosynthetic pathways, one leading to arginine and/or urea and the other to pyrimidine nucleotides. The large subunit (synthetase) binds the substrates ammonia (free or transferred from glutamine from the small subunit), hydrogencarbonate and ATP and carries out an ATP-coupled ligase reaction, activating hydrogencarbonate by forming carboxy phosphate which reacts with ammonia to form carbamoyl phosphate. The polypeptide is Carbamoyl phosphate synthase large chain (Ralstonia nicotianae (strain ATCC BAA-1114 / GMI1000) (Ralstonia solanacearum)).